A 735-amino-acid polypeptide reads, in one-letter code: E3 ubiquitin-protein ligase SH3RF2 (735 aa).

The RING-type zinc finger occupies 12-53 (CPVCFEKLDVTAKVLPCQHTFCKPCLQRIFKAHKELRCPECR). 2 consecutive SH3 domains span residues 125 to 184 (DGVP…VIKQ) and 187 to 252 (QPPP…PNLS). Disordered regions lie at residues 260-301 (SKGH…GSGQ) and 335-373 (TSPS…STAM). Residues 273-289 (LMSSPSRGKATNTSTLR) show a composition bias toward polar residues. The interval 373–466 (MVSVPSSQQH…RHPTVCTTWA (94 aa)) is interaction with PAK4. The 62-residue stretch at 383-444 (LSTNMFVALH…PSDYVIPVFS (62 aa)) folds into the SH3 3 domain. Disordered regions lie at residues 472–534 (VSSQ…PVQS), 612–637 (ETPI…KPEN), and 649–735 (VRFQ…FPSK). Positions 523–534 (RKNGSLQRPVQS) are enriched in polar residues. Over residues 617–627 (SEPPPKPPASA) the composition is skewed to pro residues. The interval 647–652 (KTVRFQ) is interaction with PPP1CA. Phosphoserine is present on S655. Positions 715–735 (FSKTTPPVSTASVSQTLFPSK) are enriched in polar residues.

Belongs to the SH3RF family. As to quaternary structure, interacts with FASLG and PPP1CA. Interacts with PAK4 and TNFRSF1A. Interacts with DLK1, MAP3K10, MAPK8IP1/JIP1, MAPK8IP2/JIP2 and MAPK8IP3/JIP3. Interacts with RAC1 (both active GTP- or inactive GDP-bound forms). In terms of processing, autoubiquitinated.

It is found in the nucleus. The catalysed reaction is S-ubiquitinyl-[E2 ubiquitin-conjugating enzyme]-L-cysteine + [acceptor protein]-L-lysine = [E2 ubiquitin-conjugating enzyme]-L-cysteine + N(6)-ubiquitinyl-[acceptor protein]-L-lysine.. It participates in protein modification; protein ubiquitination. Its function is as follows. Has E3 ubiquitin-protein ligase activity. Acts as an anti-apoptotic regulator of the JNK pathway by ubiquitinating and promoting the degradation of SH3RF1, a scaffold protein that is required for pro-apoptotic JNK activation. Facilitates TNF-alpha-mediated recruitment of adapter proteins TRADD and RIPK1 to TNFRSF1A and regulates PAK4 protein stability via inhibition of its ubiquitin-mediated proteasomal degradation. Inhibits PPP1CA phosphatase activity. In Rattus norvegicus (Rat), this protein is E3 ubiquitin-protein ligase SH3RF2 (Sh3rf2).